Reading from the N-terminus, the 310-residue chain is Quinolinate synthase 2 (310 aa).

Iminosuccinate contacts are provided by His30 and Ser47. Residue Cys92 participates in [4Fe-4S] cluster binding. Residues Tyr118–Asn120 and Ser135 each bind iminosuccinate. Residue Cys177 coordinates [4Fe-4S] cluster. Iminosuccinate is bound by residues His203–Glu205 and Thr220. Cys265 is a [4Fe-4S] cluster binding site.

It belongs to the quinolinate synthase family. Type 2 subfamily. [4Fe-4S] cluster serves as cofactor.

The protein resides in the cytoplasm. The enzyme catalyses iminosuccinate + dihydroxyacetone phosphate = quinolinate + phosphate + 2 H2O + H(+). Its pathway is cofactor biosynthesis; NAD(+) biosynthesis; quinolinate from iminoaspartate: step 1/1. Catalyzes the condensation of iminoaspartate with dihydroxyacetone phosphate to form quinolinate. This is Quinolinate synthase 2 from Methanosarcina acetivorans (strain ATCC 35395 / DSM 2834 / JCM 12185 / C2A).